A 244-amino-acid polypeptide reads, in one-letter code: Complement C1q subcomponent subunit A (244 aa).

A signal peptide spans 1-22; sequence MEAPRGWLVISVLAISLASSVT. Residues 28–94 are disordered; that stretch reads APDGTHGSAG…PGPSGPMGPA (67 aa). In terms of domain architecture, Collagen-like spans 31–109; that stretch reads GTHGSAGIPG…KGTKGSPGNI (79 aa). Residues proline 39 and proline 45 each carry the 4-hydroxyproline modification. A 5-hydroxylysine modification is found at lysine 48. Lysine 48 carries O-linked (Gal...) hydroxylysine glycosylation. Residues proline 54 and proline 57 each carry the 4-hydroxyproline modification. Lysine 67 carries the 5-hydroxylysine modification. O-linked (Gal...) hydroxylysine glycosylation is present at lysine 67. 4-hydroxyproline is present on residues proline 73, proline 79, and proline 85. Residues 79–94 are compositionally biased toward low complexity; sequence PGRMGYPGPSGPMGPA. Lysine 100 carries the 5-hydroxylysine modification. Lysine 100 carries O-linked (Gal...) hydroxylysine glycosylation. In terms of domain architecture, C1q spans 110–244; it reads KDQPRPAFSA…FSGFLIFPSA (135 aa). Asparagine 146 is a glycosylation site (N-linked (GlcNAc...) asparagine). Cysteine 172 and cysteine 189 form a disulfide bridge. Glutamine 198 is a Ca(2+) binding site.

In terms of assembly, core component of the complement C1 complex, a calcium-dependent complex composed of 1 molecule of the C1Q subcomplex, 2 molecules of C1R and 2 molecules of C1S. The C1Q subcomplex is composed 18 subunits: 3 chains of C1QA, C1QB, and C1QC trimerize to form 6 collagen-like triple helices connected to six globular ligand-recognition modules (C1q domain). Interacts with CR1 (via Sushi 24 and Sushi 25 domains). Interacts (via C-terminus) with CD33; this interaction activates CD33 inhibitory motifs. Post-translationally, O-linked glycans are assumed to be the Glc-Gal disaccharides typically found as secondary modifications of hydroxylated lysines in collagen-like domains.

It localises to the secreted. Its subcellular location is the cell surface. With respect to regulation, the C1Q subcomplex is inhibited by sulfated molecules, such as triterpenoid sulfates, heparan sulfate, or chondroitin sulfates. In terms of biological role, core component of the complement C1 complex, a multiprotein complex that initiates the classical pathway of the complement system, a cascade of proteins that leads to phagocytosis and breakdown of pathogens and signaling that strengthens the adaptive immune system. The classical complement pathway is initiated by the C1Q subcomplex of the C1 complex, which specifically binds IgG or IgM immunoglobulins complexed with antigens, forming antigen-antibody complexes on the surface of pathogens: C1QA, together with C1QB and C1QC, specifically recognizes and binds the Fc regions of IgG or IgM via its C1q domain. Immunoglobulin-binding activates the proenzyme C1R, which cleaves C1S, initiating the proteolytic cascade of the complement system. The C1Q subcomplex is activated by a hexamer of IgG complexed with antigens, while it is activated by a pentameric IgM. The C1Q subcomplex also recognizes and binds phosphatidylserine exposed on the surface of cells undergoing programmed cell death, possibly promoting activation of the complement system. The polypeptide is Complement C1q subcomponent subunit A (C1QA) (Bos taurus (Bovine)).